The sequence spans 560 residues: Beta-hexosaminidase subunit B1 (560 aa).

Residues Met-1–Ser-25 form the signal peptide. 7 N-linked (GlcNAc...) asparagine glycosylation sites follow: Asn-59, Asn-69, Asn-81, Asn-99, Asn-161, Asn-293, and Asn-346. Glu-359 serves as the catalytic Proton donor. N-linked (GlcNAc...) asparagine glycans are attached at residues Asn-366, Asn-436, Asn-472, and Asn-547.

This sequence belongs to the glycosyl hydrolase 20 family.

Its subcellular location is the lysosome. The enzyme catalyses Hydrolysis of terminal non-reducing N-acetyl-D-hexosamine residues in N-acetyl-beta-D-hexosaminides.. Functionally, responsible for the degradation of GM2 gangliosides, and a variety of other molecules containing terminal N-acetyl hexosamines. This chain is Beta-hexosaminidase subunit B1 (hexb1), found in Dictyostelium discoideum (Social amoeba).